The chain runs to 658 residues: MERGTLQPRKKAPNGYGITPIVAHKTGEPVRYEVEDDLRKLKPSRTAPKPPAINTNLAEDTFSGFPLSQSRTTVSRVSLGSRQHSSSSIRKLQTNVSDVRSYDERNQKKSAFENFVSSMSSFLTGGGSSPTSSYGSGSASPRKSTVISSPFDPKHVTHVGFNYDTGEFTGMPTEWQALLKVSGITKSEQVQHPQAVLDAMAFYSQSKKYLEEGAKPPFPRESTEKPLLSVSALSSSSHLQPTSATSSSSRLYPSRPAPTPPASSSSSPLLSSQTVKTTTSNASRQPSPLVSSKSTDNIIRSHSPVLLTPQTLSTSETKHIRPNNSTPYQRRAETSTKPKAVATPQKVEAPSAPRLQKRAPRQQSNDSAVLAKLQSICNPKNPTLLYRNFVKIGQGASGDVYSARQVGTNLSVAIKKMNINQQPKKEFIVNEILVMKSHHHKNIVNFIDTFFYKSELWMVMEYMRGGSLTEVVTNNTLSEGQIAAICKETLEGLQHLHENGIVHRDIKSDNILLSLQGDIKLTDFGFCAQIDSNMTKRTTMVGTPYWMAPEVVTRKEYGFKVDVWSLGIMAIEMVEGEPPYLNENPLRALYLIATIGTPKISRPELLSSVFHDFLSKSLTVNPKQRPSSGELLRHPFLKQAVPVSSLIPLIKSIHHSGK.

Disordered regions lie at residues 1 to 21 (MERGTLQPRKKAPNGYGITPI), 39 to 104 (RKLK…SYDE), 126 to 147 (GGSSPTSSYGSGSASPRKSTVI), and 213 to 365 (GAKP…QQSN). Residues 66–98 (PLSQSRTTVSRVSLGSRQHSSSSIRKLQTNVSD) show a composition bias toward polar residues. A compositionally biased stretch (low complexity) spans 129 to 140 (SPTSSYGSGSAS). A CRIB domain is found at 147-160 (ISSPFDPKHVTHVG). Low complexity-rich tracts occupy residues 226–254 (PLLSVSALSSSSHLQPTSATSSSSRLYPS) and 262–272 (ASSSSSPLLSS). The span at 273-300 (QTVKTTTSNASRQPSPLVSSKSTDNIIR) shows a compositional bias: polar residues. S301 and S303 each carry phosphoserine. The Protein kinase domain maps to 386 to 637 (YRNFVKIGQG…SGELLRHPFL (252 aa)). ATP is bound by residues 392–400 (IGQGASGDV) and K415. Residue D505 is the Proton acceptor of the active site.

The protein belongs to the protein kinase superfamily. STE Ser/Thr protein kinase family. STE20 subfamily. As to quaternary structure, forms an activated complex with GTP-bound ras-like cdc42. Interacts with skb1 and the SH3 domain of skb5 via its amino-terminal regulatory domain. Skb1, cdc42 and shk1 are able to form a ternary complex in vivo. Interacts with rga8 and may interact with byr2. Autophosphorylated on serine residues.

It localises to the cytoplasm. The protein localises to the cytoskeleton. Its subcellular location is the spindle. The enzyme catalyses L-seryl-[protein] + ATP = O-phospho-L-seryl-[protein] + ADP + H(+). It carries out the reaction L-threonyl-[protein] + ATP = O-phospho-L-threonyl-[protein] + ADP + H(+). In terms of biological role, MAP4K component of the MAPK pathway required for the mating pheromone response. Phosphorylates histone H2B to form H2BS10ph. Phosphorylates tea1. Required for skb1-dependent mitotic inhibitory function. Regulates microtubule dynamics and cell polarity. The sequence is that of Serine/threonine-protein kinase shk1/pak1 (shk1) from Schizosaccharomyces pombe (strain 972 / ATCC 24843) (Fission yeast).